We begin with the raw amino-acid sequence, 357 residues long: MAARMAPTPRSSKVVQGLTGLRNLGNTCFMNSILQCLSNTKELRDYCLQNQYLRDLNNNSRMRTALMSEFAKLIQLLWTSSPNDSVSPSEFKTQIQRYAPRFVGYNQQDAQEFLRFLLDGLHGEVNRVLVRPRANADTLDHLPDDEKSRQMWRRYQEREDSRVSDLFVGQLKSSLTCSECGYCSTAFDPFWDLSLPIPKKGYGEVTLMDCLRLFTKEDVLDGDEKPTCCRCKARTRCTKKFSIQKFPKILVLHLKRFSEARIRASKLTTFVNFPLKDLDLREFASQSCNHAVYNLYAVSNHSGTTMGGHYTAYCKSPISSEWHSFNDSRVTPMSSSHVRSSDAYLLFYELASPSSRM.

One can recognise a USP domain in the interval Thr-19–Ala-351. Residue Cys-28 is the Nucleophile of the active site. Zn(2+) is bound by residues Cys-177, Cys-180, Cys-228, and Cys-231. The active-site Proton acceptor is the His-309.

Belongs to the peptidase C19 family. USP2 subfamily. Homooligomer.

The protein localises to the cytoplasm. Its subcellular location is the perinuclear region. It carries out the reaction Thiol-dependent hydrolysis of ester, thioester, amide, peptide and isopeptide bonds formed by the C-terminal Gly of ubiquitin (a 76-residue protein attached to proteins as an intracellular targeting signal).. In terms of biological role, hydrolase that deubiquitinates polyubiquitinated target proteins such as MDM2, MDM4 and CCND1. Possesses both ubiquitin-specific peptidase and isopeptidase activities. May play a role in the regulation of the circadian clock. This chain is Ubiquitin carboxyl-terminal hydrolase 2 (USP2), found in Gallus gallus (Chicken).